Consider the following 380-residue polypeptide: MATECIATVPQIFSENKTKEDSSIFDAKLLNQHSHHIPQQFVWPDHEKPSTDVQPLQVPLIDLAGFLSGDSCLASEATRLVSKAATKHGFFLITNHGVDESLLSRAYLHMDSFFKAPACEKQKAQRKWGESSGYASSFVGRFSSKLPWKETLSFKFSPEEKIHSQTVKDFVSKKMGDGYEDFGKVYQEYAEAMNTLSLKIMELLGMSLGVERRYFKEFFEDSDSIFRLNYYPQCKQPELALGTGPHCDPTSLTILHQDQVGGLQVFVDNKWQSIPPNPHAFVVNIGDTFMALTNGRYKSCLHRAVVNSERERKTFAFFLCPKGEKVVKPPEELVNGVKSGERKYPDFTWSMFLEFTQKHYRADMNTLDEFSIWLKNRRSF.

Positions 221 to 321 (DSDSIFRLNY…RKTFAFFLCP (101 aa)) constitute a Fe2OG dioxygenase domain. Residues H246, D248, and H302 each coordinate Fe cation. R312 is an active-site residue.

This sequence belongs to the iron/ascorbate-dependent oxidoreductase family. GA20OX subfamily. It depends on Fe(2+) as a cofactor. L-ascorbate is required as a cofactor. As to expression, expressed at high level in developing siliques. Detected in seeds, roots, leaves and inflorescences. In seeds, specifically detected at the outer layer of the outer integument.

It catalyses the reaction gibberellin A12 + 2 2-oxoglutarate + 3 O2 + H(+) = gibberellin A9 + 2 succinate + 3 CO2 + 2 H2O. The enzyme catalyses gibberellin A12 + 3 2-oxoglutarate + 3 O2 = gibberellin A25 + 3 succinate + 3 CO2 + H2O + H(+). The catalysed reaction is gibberellin A53 + 2 2-oxoglutarate + 3 O2 + H(+) = gibberellin A20 + 2 succinate + 3 CO2 + 2 H2O. The protein operates within plant hormone biosynthesis; gibberellin biosynthesis. Key oxidase enzyme in the biosynthesis of gibberellin that catalyzes the conversion of GA12 and GA53 to GA9 and GA20 respectively, via a three-step oxidation at C-20 of the GA skeleton, and GA25 is also formed as a minor product. GA53 is less effectively oxidized than GA12. The chain is Gibberellin 20 oxidase 3 (GA20OX3) from Arabidopsis thaliana (Mouse-ear cress).